The sequence spans 427 residues: Trigger factor (427 aa).

The region spanning 163–248 is the PPIase FKBP-type domain; it reads GDTVILDFEG…LHEIKTKEVP (86 aa).

It belongs to the FKBP-type PPIase family. Tig subfamily.

Its subcellular location is the cytoplasm. The enzyme catalyses [protein]-peptidylproline (omega=180) = [protein]-peptidylproline (omega=0). In terms of biological role, involved in protein export. Acts as a chaperone by maintaining the newly synthesized protein in an open conformation. Functions as a peptidyl-prolyl cis-trans isomerase. This is Trigger factor from Listeria monocytogenes serotype 4a (strain HCC23).